A 64-amino-acid polypeptide reads, in one-letter code: Large ribosomal subunit protein bL35c (64 aa).

Belongs to the bacterial ribosomal protein bL35 family.

The protein resides in the plastid. It is found in the chloroplast. This chain is Large ribosomal subunit protein bL35c, found in Cyanidium caldarium (Red alga).